The primary structure comprises 178 residues: Large ribosomal subunit protein uL6 (178 aa).

It belongs to the universal ribosomal protein uL6 family. Part of the 50S ribosomal subunit.

This protein binds to the 23S rRNA, and is important in its secondary structure. It is located near the subunit interface in the base of the L7/L12 stalk, and near the tRNA binding site of the peptidyltransferase center. The protein is Large ribosomal subunit protein uL6 of Streptococcus agalactiae serotype V (strain ATCC BAA-611 / 2603 V/R).